Reading from the N-terminus, the 263-residue chain is MGSATREARARSVSALAGLGSKADLATAEDLFAAGRVVADSVQLRAVLSDPAADRSGKDVLVKRVFGALSAPAVELLGVIAGERWSGQDDVLDAIEELGIRSIAASAPRTVDIPAELLAFGGAVTSDAELELALRSKLADPSAKAALVERLLVGKAAGQTVAITRQLVLQPRGRSVRQALREAARIVAAQDGQTIATVVTATPLPAAQAERLRASLAAKYGDLKLNQVVDPSILGGMRVQIGGDVIDGSVSSRLSKLRLQLAG.

The protein belongs to the ATPase delta chain family. In terms of assembly, F-type ATPases have 2 components, F(1) - the catalytic core - and F(0) - the membrane proton channel. F(1) has five subunits: alpha(3), beta(3), gamma(1), delta(1), epsilon(1). F(0) has three main subunits: a(1), b(2) and c(10-14). The alpha and beta chains form an alternating ring which encloses part of the gamma chain. F(1) is attached to F(0) by a central stalk formed by the gamma and epsilon chains, while a peripheral stalk is formed by the delta and b chains.

It localises to the cell membrane. F(1)F(0) ATP synthase produces ATP from ADP in the presence of a proton or sodium gradient. F-type ATPases consist of two structural domains, F(1) containing the extramembraneous catalytic core and F(0) containing the membrane proton channel, linked together by a central stalk and a peripheral stalk. During catalysis, ATP synthesis in the catalytic domain of F(1) is coupled via a rotary mechanism of the central stalk subunits to proton translocation. Its function is as follows. This protein is part of the stalk that links CF(0) to CF(1). It either transmits conformational changes from CF(0) to CF(1) or is implicated in proton conduction. The chain is ATP synthase subunit delta from Leifsonia xyli subsp. xyli (strain CTCB07).